The following is a 636-amino-acid chain: MTYQTFFLISDPDNLDYPIYIVYDKSRVLDYFGDIFYTQSTTITEIELGDTNPDFKISILHNNNYLTSHVIKSTKYSLLDVNTVQMLLDYKDPDYELKSTCHLYIFYMTKNRFDICDYLIASNIKYIDSFGNISLLNSTNLNNYQLIKYIIDNNEFFNCRYYYLMLGILRYTKFYDLVDYILELISKSNNHIDYNSLLMELFSKFDCMGSLINSEIDAFQIKKLIDGNYFDEKVLFDTVICNNFELTKYLVEKGFNYDFDTIINSNVKFDVLKYFIELGNYLTDDHIYMILCNTSCEYYEKIIYLVDNNHITEKYFTKSIISRIIHFEFYLLDYLTNKLNIIELIDLDLLMKTSIRCNETVMVKKCIDYGINPDEYMEFAIKHDICIAKKLMELGGNIPDNMCIYNPDAYLTIESIDIILENNYDSLENLLPKIINNCDSEIIMYIIKKLTDTTIIIPHGLIKIFIRSYYWGRGNDIYSGIINSNLNFDDYQQIIIGIMRKEYNKIEQLIFSSTYYNSIELLFVVTLSENIELFKLLLEINCNDNNYLSWAFVFSIGCFKLMKYIVDNYNIDIYQRQFEVCIMSLQNYYRCYNQSDQIKFYLLLMGYEISCFNNKKNYNENIPLVKFMREMGVTLV.

11 ANK repeats span residues 63–97 (NNYL…DYEL), 99–129 (STCH…YIDS), 130–159 (FGNI…FFNC), 161–190 (YYYL…KSNN), 230–259 (FDEK…NYDF), 261–284 (TIIN…YLTD), 322–355 (SRII…KTSI), 372–400 (NPDE…NIPD), 425–455 (DSLE…DTTI), 517–546 (NSIE…NDNN), and 548–575 (LSWA…DIYQ).

The polypeptide is Putative ankyrin repeat protein L766 (Acanthamoeba polyphaga mimivirus (APMV)).